Consider the following 127-residue polypeptide: Aspartate 1-decarboxylase (127 aa).

Residue serine 25 is the Schiff-base intermediate with substrate; via pyruvic acid of the active site. Residue serine 25 is modified to Pyruvic acid (Ser). Threonine 57 is a binding site for substrate. Tyrosine 58 acts as the Proton donor in catalysis. A substrate-binding site is contributed by 73 to 75 (GAA).

This sequence belongs to the PanD family. In terms of assembly, heterooctamer of four alpha and four beta subunits. Requires pyruvate as cofactor. In terms of processing, is synthesized initially as an inactive proenzyme, which is activated by self-cleavage at a specific serine bond to produce a beta-subunit with a hydroxyl group at its C-terminus and an alpha-subunit with a pyruvoyl group at its N-terminus.

The protein localises to the cytoplasm. The catalysed reaction is L-aspartate + H(+) = beta-alanine + CO2. It participates in cofactor biosynthesis; (R)-pantothenate biosynthesis; beta-alanine from L-aspartate: step 1/1. In terms of biological role, catalyzes the pyruvoyl-dependent decarboxylation of aspartate to produce beta-alanine. The chain is Aspartate 1-decarboxylase from Anoxybacillus flavithermus (strain DSM 21510 / WK1).